We begin with the raw amino-acid sequence, 174 residues long: Endosomal/vacuolar adapter protein YPT35 (174 aa).

The region spanning 34–168 (QVQRIYVGDG…EFLGVSSDVS (135 aa)) is the PX domain.

It belongs to the YPT35 family.

The protein localises to the endosome membrane. It localises to the vacuole membrane. Functionally, recruits the lipid transfer protein VPS13 to endosomal and vacuolar membranes. In Vanderwaltozyma polyspora (strain ATCC 22028 / DSM 70294 / BCRC 21397 / CBS 2163 / NBRC 10782 / NRRL Y-8283 / UCD 57-17) (Kluyveromyces polysporus), this protein is Endosomal/vacuolar adapter protein YPT35 (YPT35).